A 67-amino-acid chain; its full sequence is Large ribosomal subunit protein bL35 (67 aa).

Belongs to the bacterial ribosomal protein bL35 family.

In Zymomonas mobilis subsp. mobilis (strain ATCC 31821 / ZM4 / CP4), this protein is Large ribosomal subunit protein bL35.